The following is a 123-amino-acid chain: Small ribosomal subunit protein uS13c (123 aa).

The segment at Gly-99 to Lys-123 is disordered. Residues Gln-100–Lys-123 are compositionally biased toward basic residues.

This sequence belongs to the universal ribosomal protein uS13 family. Part of the 30S ribosomal subunit.

It is found in the plastid. The protein resides in the chloroplast. Located at the top of the head of the 30S subunit, it contacts several helices of the 16S rRNA. The protein is Small ribosomal subunit protein uS13c of Cyanidioschyzon merolae (strain NIES-3377 / 10D) (Unicellular red alga).